The chain runs to 124 residues: Large ribosomal subunit protein bL12 (124 aa).

The protein belongs to the bacterial ribosomal protein bL12 family. In terms of assembly, homodimer. Part of the ribosomal stalk of the 50S ribosomal subunit. Forms a multimeric L10(L12)X complex, where L10 forms an elongated spine to which 2 to 4 L12 dimers bind in a sequential fashion. Binds GTP-bound translation factors.

In terms of biological role, forms part of the ribosomal stalk which helps the ribosome interact with GTP-bound translation factors. Is thus essential for accurate translation. The chain is Large ribosomal subunit protein bL12 from Phocaeicola vulgatus (strain ATCC 8482 / DSM 1447 / JCM 5826 / CCUG 4940 / NBRC 14291 / NCTC 11154) (Bacteroides vulgatus).